A 220-amino-acid chain; its full sequence is Probable GTP-binding protein EngB (220 aa).

Residues 23–199 (SVREVAFAGR…ERVLASWLDI (177 aa)) form the EngB-type G domain. The Mg(2+) site is built by Ser-38 and Thr-60.

This sequence belongs to the TRAFAC class TrmE-Era-EngA-EngB-Septin-like GTPase superfamily. EngB GTPase family. The cofactor is Mg(2+).

In terms of biological role, necessary for normal cell division and for the maintenance of normal septation. This chain is Probable GTP-binding protein EngB, found in Dechloromonas aromatica (strain RCB).